We begin with the raw amino-acid sequence, 136 residues long: ATP synthase F(0) complex subunit C1, mitochondrial (136 aa).

The transit peptide at 1-61 (MQTAGALFIS…REFQTSVVSR (61 aa)) directs the protein to the mitochondrion. The helical transmembrane segment at 77-97 (VGVAGSGAGIGTVFGSLIIGY) threads the bilayer. An N6,N6,N6-trimethyllysine modification is found at Lys-104. A helical membrane pass occupies residues 112–132 (ILGFALSEAMGLFCLMVAFLI).

The protein belongs to the ATPase C chain family. In terms of assembly, homooctamer; the c-ring consists of eight c subunits forming a circle, and each subunit adopts a hairpin shape. Component of the ATP synthase complex composed at least of ATP5F1A/subunit alpha, ATP5F1B/subunit beta, ATP5MC1/subunit c (homooctomer), MT-ATP6/subunit a, MT-ATP8/subunit 8, ATP5ME/subunit e, ATP5MF/subunit f, ATP5MG/subunit g, ATP5MK/subunit k, ATP5MJ/subunit j, ATP5F1C/subunit gamma, ATP5F1D/subunit delta, ATP5F1E/subunit epsilon, ATP5PF/subunit F6, ATP5PB/subunit b, ATP5PD/subunit d, ATP5PO/subunit OSCP. ATP synthase complex consists of a soluble F(1) head domain (subunits alpha(3) and beta(3)) - the catalytic core - and a membrane F(0) domain - the membrane proton channel (subunits c, a, 8, e, f, g, k and j). These two domains are linked by a central stalk (subunits gamma, delta, and epsilon) rotating inside the F1 region and a stationary peripheral stalk (subunits F6, b, d, and OSCP). Interacts with TMEM70 (homooligomer form); this interaction facilitates the oligomer formation of subunit c/ATP5MC1 (c-ring) and the c-ring membrane insertion and also protects ATP5MC1 against intramitochondrial proteolysis. Trimethylated by ATPSCKMT at Lys-104. Methylation is required for proper incorporation of the C subunit into the ATP synthase complex and mitochondrial respiration.

The protein resides in the mitochondrion membrane. The enzyme catalyses H(+)(in) = H(+)(out). Subunit c, of the mitochondrial membrane ATP synthase complex (F(1)F(0) ATP synthase or Complex V) that produces ATP from ADP in the presence of a proton gradient across the membrane which is generated by electron transport complexes of the respiratory chain. ATP synthase complex consist of a soluble F(1) head domain - the catalytic core - and a membrane F(1) domain - the membrane proton channel. These two domains are linked by a central stalk rotating inside the F(1) region and a stationary peripheral stalk. During catalysis, ATP synthesis in the catalytic domain of F(1) is coupled via a rotary mechanism of the central stalk subunits to proton translocation. With the subunit a (MT-ATP6), forms the proton-conducting channel in the F(0) domain, that contains two crucial half-channels (inlet and outlet) that facilitate proton movement from the mitochondrial intermembrane space (IMS) into the matrix. Protons are taken up via the inlet half-channel and released through the outlet half-channel, following a Grotthuss mechanism. The polypeptide is ATP synthase F(0) complex subunit C1, mitochondrial (Homo sapiens (Human)).